Here is a 950-residue protein sequence, read N- to C-terminus: Protocadherin alpha-3 (950 aa).

Residues 1-29 (MLFSWREDPGAQCLLLSLLLLAASEVGSG) form the signal peptide. 6 Cadherin domains span residues 30–133 (QLHY…APVF), 134–242 (PMSV…APAF), 243–350 (ERTI…VPEL), 351–455 (VIHS…APAF), 456–565 (SQSE…APAL), and 581–678 (VPRS…APKA). Residues 30 to 697 (QLHYSVSEEA…GPEAALVDVN (668 aa)) lie on the Extracellular side of the membrane. Asn-257 and Asn-265 each carry an N-linked (GlcNAc...) asparagine glycan. The N-linked (GlcNAc...) asparagine glycan is linked to Asn-548. Residues 698–718 (VYLIVAICAVSSLLVLTLLLY) form a helical membrane-spanning segment. Residues 719-950 (TALRCSAPPT…GNSTTDNSDQ (232 aa)) lie on the Cytoplasmic side of the membrane. PXXP repeat units follow at residues 734–737 (PGKP) and 774–777 (PSLP). Residues 734-894 (PGKPTLVCSS…PDKFIIPGSP (161 aa)) form a 6 X 4 AA repeats of P-X-X-P region. Disordered stretches follow at residues 777–806 (PPCP…NPDW), 831–856 (GPGG…EVSP), and 869–889 (FKYG…DKFI). A compositionally biased stretch (basic and acidic residues) spans 782–797 (SRDREEKQDVDVDLSA). 4 PXXP repeats span residues 799–802 (PRQP), 832–835 (PGGP), 873–876 (PGNP), and 891–894 (PGSP). The disordered stretch occupies residues 901–950 (QEPANSQIDKSDFITFGKKEETKKKKKKKKGNKTQEKKEKGNSTTDNSDQ). The segment covering 909–923 (DKSDFITFGKKEETK) has biased composition (basic and acidic residues).

It localises to the cell membrane. Functionally, potential calcium-dependent cell-adhesion protein. May be involved in the establishment and maintenance of specific neuronal connections in the brain. In Pan troglodytes (Chimpanzee), this protein is Protocadherin alpha-3 (PCDHA3).